We begin with the raw amino-acid sequence, 355 residues long: Methylthioribose-1-phosphate isomerase (355 aa).

Substrate-binding positions include 47–49 (RGA), arginine 90, and glutamine 197. The active-site Proton donor is the aspartate 238. Residue 248–249 (NK) participates in substrate binding.

The protein belongs to the eIF-2B alpha/beta/delta subunits family. MtnA subfamily.

The enzyme catalyses 5-(methylsulfanyl)-alpha-D-ribose 1-phosphate = 5-(methylsulfanyl)-D-ribulose 1-phosphate. It participates in amino-acid biosynthesis; L-methionine biosynthesis via salvage pathway; L-methionine from S-methyl-5-thio-alpha-D-ribose 1-phosphate: step 1/6. Catalyzes the interconversion of methylthioribose-1-phosphate (MTR-1-P) into methylthioribulose-1-phosphate (MTRu-1-P). This Herpetosiphon aurantiacus (strain ATCC 23779 / DSM 785 / 114-95) protein is Methylthioribose-1-phosphate isomerase.